A 153-amino-acid chain; its full sequence is MPTLFLFGASEGGLFDFDATLPLMAVQVVLLTFILNALFFKPVGRVVEEREDYVNTSRAEAKKKIAEVELLETELKDQLKEARLEAQKVILEAEQDSENLYKEALALATSEANASREKARREIDSQRDEALNQLKSEADNLGDLIIERLLAKK.

Residues 20–40 (TLPLMAVQVVLLTFILNALFF) traverse the membrane as a helical segment.

The protein belongs to the ATPase B chain family. F-type ATPases have 2 components, F(1) - the catalytic core - and F(0) - the membrane proton channel. F(1) has five subunits: alpha(3), beta(3), gamma(1), delta(1), epsilon(1). F(0) has four main subunits: a(1), b(1), b'(1) and c(10-14). The alpha and beta chains form an alternating ring which encloses part of the gamma chain. F(1) is attached to F(0) by a central stalk formed by the gamma and epsilon chains, while a peripheral stalk is formed by the delta, b and b' chains.

The protein localises to the cellular thylakoid membrane. Its function is as follows. F(1)F(0) ATP synthase produces ATP from ADP in the presence of a proton or sodium gradient. F-type ATPases consist of two structural domains, F(1) containing the extramembraneous catalytic core and F(0) containing the membrane proton channel, linked together by a central stalk and a peripheral stalk. During catalysis, ATP synthesis in the catalytic domain of F(1) is coupled via a rotary mechanism of the central stalk subunits to proton translocation. In terms of biological role, component of the F(0) channel, it forms part of the peripheral stalk, linking F(1) to F(0). The b'-subunit is a diverged and duplicated form of b found in plants and photosynthetic bacteria. The sequence is that of ATP synthase subunit b' from Prochlorococcus marinus (strain NATL1A).